Here is a 175-residue protein sequence, read N- to C-terminus: Inorganic pyrophosphatase 1 (175 aa).

Substrate is bound by residues lysine 30, arginine 44, and tyrosine 56. Mg(2+) is bound by residues aspartate 66, aspartate 71, and aspartate 103. Substrate is bound at residue tyrosine 142.

The protein belongs to the PPase family. As to quaternary structure, homohexamer. Mg(2+) serves as cofactor.

Its subcellular location is the cytoplasm. The enzyme catalyses diphosphate + H2O = 2 phosphate + H(+). Its function is as follows. Catalyzes the hydrolysis of inorganic pyrophosphate (PPi) forming two phosphate ions. In Pseudomonas syringae pv. tomato (strain ATCC BAA-871 / DC3000), this protein is Inorganic pyrophosphatase 1.